A 1021-amino-acid polypeptide reads, in one-letter code: Caspase recruitment domain-containing protein 10 (1021 aa).

The segment at 1 to 24 (MQGRADAGEADEEAGAGSGSEAEE) is disordered. At Ser18 the chain carries Phosphoserine. The 93-residue stretch at 23 to 115 (EEDALWERIE…EHFTLLTGQE (93 aa)) folds into the CARD domain. Residues 138–450 (TEVRRLREAR…LEAQLQRTQG (313 aa)) adopt a coiled-coil conformation. Disordered stretches follow at residues 475–544 (EFPS…MSDI), 597–616 (SPPA…PGLG), and 790–809 (LVRP…QLPA). 2 stretches are compositionally biased toward basic and acidic residues: residues 495–508 (HTSE…KEIN) and 525–535 (RQREEDPEPPK).

As to quaternary structure, CARD10 and BCL10 bind to each other by CARD-CARD interaction. They both participate in a complex with MALT1, where MALT1 binds to BCL10. Interacts with TMEM43; this interaction is essential for EGFR-mediated NF-kappa-B activation. As to expression, highly expressed in kidney, heart followed by brain, lung, liver, skeletal muscle and testis.

Scaffold protein that plays an important role in mediating the activation of NF-kappa-B via BCL10 or EGFR. The sequence is that of Caspase recruitment domain-containing protein 10 (Card10) from Mus musculus (Mouse).